A 601-amino-acid chain; its full sequence is Probable translation initiation factor IF-2 (601 aa).

One can recognise a tr-type G domain in the interval 10 to 227; sequence LRAPIVVVLG…VLAGLAQRYL (218 aa). Residues 19–26 form a G1 region; that stretch reads GHVDAGKT. GTP is bound at residue 19 to 26; sequence GHVDAGKT. Residues 44–48 form a G2 region; it reads TMTQH. Positions 83–86 are G3; that stretch reads DTPG. GTP contacts are provided by residues 83–87 and 137–140; these read DTPGH and NKID. The G4 stretch occupies residues 137–140; it reads NKID. A G5 region spans residues 205 to 207; sequence SAV.

Belongs to the TRAFAC class translation factor GTPase superfamily. Classic translation factor GTPase family. IF-2 subfamily.

In terms of biological role, function in general translation initiation by promoting the binding of the formylmethionine-tRNA to ribosomes. Seems to function along with eIF-2. This Thermofilum pendens (strain DSM 2475 / Hrk 5) protein is Probable translation initiation factor IF-2.